A 220-amino-acid chain; its full sequence is Ribosomal RNA large subunit methyltransferase E (220 aa).

Residues G60, W62, D92, D108, and D133 each coordinate S-adenosyl-L-methionine. The active-site Proton acceptor is the K173. Positions 195–220 (APRKPKASRDKSSETFILGRHLKQPR) are disordered.

The protein belongs to the class I-like SAM-binding methyltransferase superfamily. RNA methyltransferase RlmE family.

It is found in the cytoplasm. The enzyme catalyses uridine(2552) in 23S rRNA + S-adenosyl-L-methionine = 2'-O-methyluridine(2552) in 23S rRNA + S-adenosyl-L-homocysteine + H(+). Its function is as follows. Specifically methylates the uridine in position 2552 of 23S rRNA at the 2'-O position of the ribose in the fully assembled 50S ribosomal subunit. This is Ribosomal RNA large subunit methyltransferase E from Burkholderia pseudomallei (strain 1710b).